We begin with the raw amino-acid sequence, 89 residues long: Small ribosomal subunit protein bS20 (89 aa).

Residues 1–10 (MKNRSAIKRH) show a composition bias toward basic residues. Residues 1 to 30 (MKNRSAIKRHNQSEVRRMRNRSAKSEVRTT) form a disordered region. A compositionally biased stretch (basic and acidic residues) spans 11–30 (NQSEVRRMRNRSAKSEVRTT).

This sequence belongs to the bacterial ribosomal protein bS20 family.

Functionally, binds directly to 16S ribosomal RNA. This is Small ribosomal subunit protein bS20 from Treponema denticola (strain ATCC 35405 / DSM 14222 / CIP 103919 / JCM 8153 / KCTC 15104).